The sequence spans 290 residues: Oxaloacetate decarboxylase 2 (290 aa).

Ser50 serves as a coordination point for substrate. Asp88 serves as a coordination point for Mg(2+). Residues Arg159 and His235 each coordinate substrate.

The protein belongs to the isocitrate lyase/PEP mutase superfamily. Oxaloacetate decarboxylase family. In terms of assembly, homotetramer; dimer of dimers. It depends on Mg(2+) as a cofactor.

The catalysed reaction is oxaloacetate + H(+) = pyruvate + CO2. Functionally, catalyzes the decarboxylation of oxaloacetate into pyruvate. Seems to play a role in maintaining cellular concentrations of bicarbonate and pyruvate. This is Oxaloacetate decarboxylase 2 from Pseudomonas fluorescens (strain Pf0-1).